Here is a 23-residue protein sequence, read N- to C-terminus: U1-poneritoxin-Da3b (23 aa).

The protein belongs to the non-disulfide-bridged peptide (NDBP) superfamily. Medium-length antimicrobial peptide (group 3) family. Ponericin-W subfamily. As to expression, expressed by the venom gland.

It is found in the secreted. The protein resides in the target cell membrane. May have antimicrobial properties, like most ant linear peptides. May act by disrupting the integrity of the bacterial cell membrane. The protein is U1-poneritoxin-Da3b of Dinoponera australis (Giant neotropical hunting ant).